Consider the following 347-residue polypeptide: Ketol-acid reductoisomerase (NADP(+)) (347 aa).

The 185-residue stretch at Met-1 to Thr-185 folds into the KARI N-terminal Rossmann domain. Residues Tyr-24–Gln-27, Arg-47, Ser-50, Ser-52, and Asp-82–Gln-85 contribute to the NADP(+) site. The active site involves His-107. Gly-133 contributes to the NADP(+) binding site. In terms of domain architecture, KARI C-terminal knotted spans Ser-186–Leu-336. Residues Asp-194, Glu-198, Glu-230, and Glu-234 each contribute to the Mg(2+) site. Position 255 (Ser-255) interacts with substrate.

Belongs to the ketol-acid reductoisomerase family. The cofactor is Mg(2+).

The enzyme catalyses (2R)-2,3-dihydroxy-3-methylbutanoate + NADP(+) = (2S)-2-acetolactate + NADPH + H(+). It catalyses the reaction (2R,3R)-2,3-dihydroxy-3-methylpentanoate + NADP(+) = (S)-2-ethyl-2-hydroxy-3-oxobutanoate + NADPH + H(+). The protein operates within amino-acid biosynthesis; L-isoleucine biosynthesis; L-isoleucine from 2-oxobutanoate: step 2/4. It functions in the pathway amino-acid biosynthesis; L-valine biosynthesis; L-valine from pyruvate: step 2/4. In terms of biological role, involved in the biosynthesis of branched-chain amino acids (BCAA). Catalyzes an alkyl-migration followed by a ketol-acid reduction of (S)-2-acetolactate (S2AL) to yield (R)-2,3-dihydroxy-isovalerate. In the isomerase reaction, S2AL is rearranged via a Mg-dependent methyl migration to produce 3-hydroxy-3-methyl-2-ketobutyrate (HMKB). In the reductase reaction, this 2-ketoacid undergoes a metal-dependent reduction by NADPH to yield (R)-2,3-dihydroxy-isovalerate. This is Ketol-acid reductoisomerase (NADP(+)) from Gamma-proteobacterium EBAC31A08.